A 338-amino-acid chain; its full sequence is Ketol-acid reductoisomerase (NADP(+)) (338 aa).

A KARI N-terminal Rossmann domain is found at 1-181 (MKVFYDKDCD…GGGRAGIIET (181 aa)). NADP(+)-binding positions include 24–27 (YGSQ), Arg47, and Ser52. His107 is a catalytic residue. Gly133 lines the NADP(+) pocket. The region spanning 182 to 327 (DFREETETDL…GKLRAMMPWI (146 aa)) is the KARI C-terminal knotted domain. Residues Asp190, Glu194, Glu226, and Glu230 each coordinate Mg(2+). Ser251 is a substrate binding site.

The protein belongs to the ketol-acid reductoisomerase family. Requires Mg(2+) as cofactor.

It carries out the reaction (2R)-2,3-dihydroxy-3-methylbutanoate + NADP(+) = (2S)-2-acetolactate + NADPH + H(+). The catalysed reaction is (2R,3R)-2,3-dihydroxy-3-methylpentanoate + NADP(+) = (S)-2-ethyl-2-hydroxy-3-oxobutanoate + NADPH + H(+). Its pathway is amino-acid biosynthesis; L-isoleucine biosynthesis; L-isoleucine from 2-oxobutanoate: step 2/4. It functions in the pathway amino-acid biosynthesis; L-valine biosynthesis; L-valine from pyruvate: step 2/4. Involved in the biosynthesis of branched-chain amino acids (BCAA). Catalyzes an alkyl-migration followed by a ketol-acid reduction of (S)-2-acetolactate (S2AL) to yield (R)-2,3-dihydroxy-isovalerate. In the isomerase reaction, S2AL is rearranged via a Mg-dependent methyl migration to produce 3-hydroxy-3-methyl-2-ketobutyrate (HMKB). In the reductase reaction, this 2-ketoacid undergoes a metal-dependent reduction by NADPH to yield (R)-2,3-dihydroxy-isovalerate. The polypeptide is Ketol-acid reductoisomerase (NADP(+)) (Bordetella petrii (strain ATCC BAA-461 / DSM 12804 / CCUG 43448)).